The following is a 200-amino-acid chain: General odorant-binding protein 70 (200 aa).

Positions 1–29 are cleaved as a signal peptide; sequence MRRQYSMWASTVAVIACGSALMLLHPVGA. 2 cysteine pairs are disulfide-bonded: cysteine 105–cysteine 174 and cysteine 152–cysteine 183.

This sequence belongs to the PBP/GOBP family.

Its subcellular location is the secreted. In terms of biological role, present in the aqueous fluid surrounding olfactory sensory dendrites and are thought to aid in the capture and transport of hydrophobic odorants into and through this fluid. The chain is General odorant-binding protein 70 (Obp70) from Anopheles gambiae (African malaria mosquito).